Reading from the N-terminus, the 261-residue chain is tRNA U34 carboxymethyltransferase (261 aa).

Residues Lys-25, Trp-39, Lys-44, Gly-63, 114-115, Tyr-135, and Arg-250 contribute to the carboxy-S-adenosyl-L-methionine site; that span reads VE.

This sequence belongs to the class I-like SAM-binding methyltransferase superfamily. CmoB family. As to quaternary structure, homotetramer.

It catalyses the reaction carboxy-S-adenosyl-L-methionine + 5-hydroxyuridine(34) in tRNA = 5-carboxymethoxyuridine(34) in tRNA + S-adenosyl-L-homocysteine + H(+). In terms of biological role, catalyzes carboxymethyl transfer from carboxy-S-adenosyl-L-methionine (Cx-SAM) to 5-hydroxyuridine (ho5U) to form 5-carboxymethoxyuridine (cmo5U) at position 34 in tRNAs. In Helicobacter pylori (strain G27), this protein is tRNA U34 carboxymethyltransferase.